A 247-amino-acid polypeptide reads, in one-letter code: AA9 family lytic polysaccharide monooxygenase A (247 aa).

The first 19 residues, M1 to A19, serve as a signal peptide directing secretion. Residues H20 and H100 each coordinate Cu(2+). C60 and C185 are oxidised to a cystine. Residue H165 participates in O2 binding. Residue Y182 participates in Cu(2+) binding. N193 carries an N-linked (GlcNAc...) asparagine glycan.

Belongs to the polysaccharide monooxygenase AA9 family. The cofactor is Cu(2+).

The protein localises to the secreted. It carries out the reaction [(1-&gt;4)-beta-D-glucosyl]n+m + reduced acceptor + O2 = 4-dehydro-beta-D-glucosyl-[(1-&gt;4)-beta-D-glucosyl]n-1 + [(1-&gt;4)-beta-D-glucosyl]m + acceptor + H2O.. Lytic polysaccharide monooxygenase (LPMO) that depolymerizes polysaccharides via the oxidation of scissile alpha- or beta-(1-4)-glycosidic bonds, yielding C4 oxidation products. Catalysis by LPMOs requires the reduction of the active-site copper from Cu(II) to Cu(I) by a reducing agent and H(2)O(2) or O(2) as a cosubstrate. Shows C4-oxidative cleavage of amorphous cellulose and soluble cello-oligosaccharides. Also active on xyloglucan, mixed-linkage beta-glucan, and glucomannan. Not active on crystalline forms of cellulose. Has higher affinity for linear substrates compared to branched substrates. Catalyzes a fast and specific peroxygenase reaction that is at least two orders of magnitude faster than the apparent monooxygenase reaction. The protein is AA9 family lytic polysaccharide monooxygenase A of Schizophyllum commune (strain H4-8 / FGSC 9210) (Split gill fungus).